A 175-amino-acid polypeptide reads, in one-letter code: Protein SELF-PRUNING (175 aa).

Belongs to the phosphatidylethanolamine-binding protein family.

Its subcellular location is the cytoplasm. In terms of biological role, not known. In plants homozygous for the recessive allele of the SP gene, sympodial segments develop progressively fewer nodes until the shoot is terminated by two consecutive. inflorescences. The chain is Protein SELF-PRUNING (SP) from Solanum lycopersicum (Tomato).